A 323-amino-acid chain; its full sequence is uncharacterized protein (323 aa).

A helical transmembrane segment spans residues 4–24 (IIFAFIILFVFLLPMIIFYQP).

The protein resides in the membrane. This is an uncharacterized protein from Escherichia coli (strain K12).